The following is a 485-amino-acid chain: NADH-quinone oxidoreductase subunit N (485 aa).

The next 14 membrane-spanning stretches (helical) occupy residues 8–28 (LIALLPLLIVGLTVVVVMLSI), 35–55 (FLNATLSVIGLNAALVSLWFV), 71–91 (GFAMLYTGLVLLASLATCTFA), 105–125 (FYLLVLIASLGGILLANANHL), 127–147 (TLFLGIELISLPLFGLIGYAF), 159–179 (YTILSAAASSFLLFGMALVYA), 203–223 (LLAGFGLMIVGPGFKLSLVPF), 235–255 (PAPVSTFLATASKIAIFGVVM), 271–291 (VVLGIIAFASIIFGNLMALSQ), 297–317 (LLGYSSISHLGYLLVALIALQ), 326–346 (VGVYLAGYLFSSLGAFGVVSL), 373–393 (AAVMTVMMLSLAGIPMTLGFI), 408–430 (WWLVAAVVVGSAIGLYYYLRVAV), and 455–475 (IVVLISALLVLVLGVWPQPLI).

This sequence belongs to the complex I subunit 2 family. As to quaternary structure, NDH-1 is composed of 13 different subunits. Subunits NuoA, H, J, K, L, M, N constitute the membrane sector of the complex.

Its subcellular location is the cell inner membrane. It carries out the reaction a quinone + NADH + 5 H(+)(in) = a quinol + NAD(+) + 4 H(+)(out). NDH-1 shuttles electrons from NADH, via FMN and iron-sulfur (Fe-S) centers, to quinones in the respiratory chain. The immediate electron acceptor for the enzyme in this species is believed to be ubiquinone. Couples the redox reaction to proton translocation (for every two electrons transferred, four hydrogen ions are translocated across the cytoplasmic membrane), and thus conserves the redox energy in a proton gradient. This Salmonella paratyphi A (strain ATCC 9150 / SARB42) protein is NADH-quinone oxidoreductase subunit N.